The following is a 447-amino-acid chain: Phospholipase A(1) DAD1, chloroplastic (447 aa).

The N-terminal 46 residues, 1 to 46 (MRFSLSPVRPHSVVVPSLPKQDVVSYISGTTSNRQCRCVLTLPSPS), are a transit peptide targeting the chloroplast. The short motif at 293-297 (GHSLG) is the GXSXG element. Residue S295 is the Acyl-ester intermediate of the active site. Active-site charge relay system residues include D352 and H418.

This sequence belongs to the AB hydrolase superfamily. Lipase family. In terms of tissue distribution, expressed in flower buds, but not in leaves or roots. Restricted to the stamen filaments immediately before flower opening.

The protein resides in the plastid. Its subcellular location is the chloroplast. The enzyme catalyses a 1,2-diacyl-sn-glycero-3-phosphocholine + H2O = a 2-acyl-sn-glycero-3-phosphocholine + a fatty acid + H(+). It carries out the reaction 1-hexadecanoyl-2-(9Z,12Z-octadecadienoyl)-sn-glycero-3-phosphocholine + H2O = 2-(9Z,12Z-octadecadienoyl)-sn-glycero-3-phosphocholine + hexadecanoate + H(+). In terms of biological role, sn-1-specific phospholipase that releases free fatty acids from phospholipids. Low activity on galactolipids and triacylglycerols. Catalyzes the initial step of jasmonic acid biosynthesis. Not essential for jasmonate biosynthesis after wounding or upon pathogen infection. The polypeptide is Phospholipase A(1) DAD1, chloroplastic (Arabidopsis thaliana (Mouse-ear cress)).